The sequence spans 298 residues: Tyrosine recombinase XerC (298 aa).

Positions 2 to 88 constitute a Core-binding (CB) domain; sequence TDLHTDVERY…ALRSFFDWLV (87 aa). Residues 109–288 form the Tyr recombinase domain; that stretch reads HLPKNIDVDD…DFQHLASVYD (180 aa). Active-site residues include R148, K172, H240, R243, and H266. Residue Y275 is the O-(3'-phospho-DNA)-tyrosine intermediate of the active site.

It belongs to the 'phage' integrase family. XerC subfamily. As to quaternary structure, forms a cyclic heterotetrameric complex composed of two molecules of XerC and two molecules of XerD, in which XerC interacts with XerD via its C-terminal region, XerD interacts with XerC via its C-terminal region and so on.

Its subcellular location is the cytoplasm. FtsK may regulate the catalytic switch between XerC and XerD in the heterotetrameric complex during the two steps of the recombination process. Site-specific tyrosine recombinase, which acts by catalyzing the cutting and rejoining of the recombining DNA molecules. Binds cooperatively to specific DNA consensus sequences that are separated from XerD binding sites by a short central region, forming the heterotetrameric XerC-XerD complex that recombines DNA substrates. The complex is essential to convert dimers of the bacterial chromosome into monomers to permit their segregation at cell division. It also contributes to the segregational stability of plasmids. In the complex XerC specifically exchanges the top DNA strands. This Shigella dysenteriae serotype 1 (strain Sd197) protein is Tyrosine recombinase XerC.